The primary structure comprises 217 residues: uncharacterized protein (217 aa).

7 helical membrane-spanning segments follow: residues Ile-4–Thr-23, Asn-44–Val-66, Thr-76–Ile-98, Phe-111–Ile-128, Met-132–Leu-154, Ala-166–Phe-188, and Leu-198–Leu-215.

It localises to the cell membrane. This is an uncharacterized protein from Archaeoglobus fulgidus (strain ATCC 49558 / DSM 4304 / JCM 9628 / NBRC 100126 / VC-16).